Here is a 265-residue protein sequence, read N- to C-terminus: Mlc titration factor A (265 aa).

Residues histidine 111, histidine 148, histidine 152, and glutamate 211 each coordinate Zn(2+).

The protein belongs to the MtfA family. Interacts with Mlc. Requires Zn(2+) as cofactor.

It is found in the cytoplasm. Involved in the modulation of the activity of the glucose-phosphotransferase system (glucose-PTS). Interacts with the transcriptional repressor Mlc, preventing its interaction with DNA and leading to the modulation of expression of genes regulated by Mlc, including ptsG, which encodes the PTS system glucose-specific EIICB component. Functionally, shows zinc-dependent metallopeptidase activity. The protein is Mlc titration factor A of Salmonella enteritidis PT4 (strain P125109).